The sequence spans 196 residues: Serine recombinase PinQ (196 aa).

One can recognise a Resolvase/invertase-type recombinase catalytic domain in the interval 3-143 (QIFAYCRIST…SGIVRARGAG (141 aa)). Ser-11 serves as the catalytic O-(5'-phospho-DNA)-serine intermediate.

This sequence belongs to the site-specific recombinase resolvase family.

The polypeptide is Serine recombinase PinQ (pinQ) (Escherichia coli (strain K12)).